A 226-amino-acid polypeptide reads, in one-letter code: Phosphoglycolate phosphatase (226 aa).

Residue aspartate 9 is the Nucleophile of the active site. Mg(2+) is bound by residues aspartate 9 and aspartate 11. Position 150 (lysine 150) interacts with substrate. 2 residues coordinate Mg(2+): aspartate 173 and aspartate 177.

The protein belongs to the archaeal SPP-like hydrolase family. Mg(2+) serves as cofactor.

It carries out the reaction 2-phosphoglycolate + H2O = glycolate + phosphate. Its function is as follows. Catalyzes the dephosphorylation of 2-phosphoglycolate. The protein is Phosphoglycolate phosphatase of Methanosarcina mazei (strain ATCC BAA-159 / DSM 3647 / Goe1 / Go1 / JCM 11833 / OCM 88) (Methanosarcina frisia).